A 181-amino-acid polypeptide reads, in one-letter code: Inner membrane-spanning protein YciB (181 aa).

5 helical membrane passes run 22–42, 50–70, 80–100, 122–142, and 148–168; these read IYTA…VTYA, MQLI…FLHD, IVYC…KPVI, WVLF…EMPL, and FKVF…GMYV.

This sequence belongs to the YciB family.

The protein localises to the cell inner membrane. Functionally, plays a role in cell envelope biogenesis, maintenance of cell envelope integrity and membrane homeostasis. The polypeptide is Inner membrane-spanning protein YciB (Aliivibrio fischeri (strain MJ11) (Vibrio fischeri)).